The primary structure comprises 341 residues: MTEQALLLVNLGSPASTEVADVRRYLNQFLMDPYVVDLPWPLRRLLVSMILIKRPEQSAHAYASIWWPEGSPLVVLSRRLQEAVKPHWTKGPVELAMRYGEPSIEGALKRLAGQGITQVALAPLYPQFADSTTTTVIQEARRVIREHGLDLKLSILQPFYDQPEYLDALVASAMPHLQQGFDHLLLSFHGLPERHLHKSDPTGAHCLKGDDCCQRAEGAVLATCYRAQCIRTAEGFATRAGLRRDQWSVSFQSRLGRAKWIEPYTETRLDELAEQGVKKLLVMCPAFVSDCIETLEEIGDRGREQFIEAGGQELVLVPCLNTHEDWVQALVQLCSRAPQAL.

Residues histidine 189 and glutamate 293 each coordinate Fe cation.

It belongs to the ferrochelatase family.

The protein localises to the cytoplasm. It catalyses the reaction heme b + 2 H(+) = protoporphyrin IX + Fe(2+). It participates in porphyrin-containing compound metabolism; protoheme biosynthesis; protoheme from protoporphyrin-IX: step 1/1. In terms of biological role, catalyzes the ferrous insertion into protoporphyrin IX. The polypeptide is Ferrochelatase (Stutzerimonas stutzeri (strain A1501) (Pseudomonas stutzeri)).